Consider the following 613-residue polypeptide: UBX domain-containing protein 3 (613 aa).

Disordered regions lie at residues 67-223 (PAAA…PINP) and 453-472 (MNEQ…RNQQ). Low complexity predominate over residues 68–82 (AAASGRNAGASSSSR). A compositionally biased stretch (basic residues) spans 137 to 149 (THHRGAAIPRQKR). A compositionally biased stretch (low complexity) spans 158 to 169 (SSSGSSSASFSS). A coiled-coil region spans residues 452 to 517 (RMNEQSERRE…EEEECVRRQT (66 aa)). In terms of domain architecture, UBX spans 531-610 (PLAEIINVKF…KWPAREQIFV (80 aa)). The Interaction with cdc-48 motif lies at 582 to 584 (FPK).

In terms of assembly, forms a complex composed of ubxn-3, cdc-48.1, ufd-1 and npl-4.1. Forms a complex composed of ubxn-3, cdc-48.1 and/or cdc-48.2 and substrate cdt-1. Interacts (via FPK motif) with cdc-48.1 (via N-terminus) and cdc-48.2 (via N-terminus). Interacts (via N-terminus) with cdt-1 and ubiquitinated protein substrates; the interaction is cdc-48-independent. May interact with npl-4.1. As to expression, expressed in the germline (at protein level). Expressed in spermatocytes but not in mature sperm (at protein level). Expressed in the spermatheca and nerve cells.

Its subcellular location is the nucleus. It is found in the cytoplasm. The protein localises to the perinuclear region. The protein resides in the chromosome. Ubiquitin-binding protein which acts as an adapter for ATPase cdc-48.1 and/or cdc-48.2, conferring substrate specificity. Together with ubxn-1 and ubxn-2, plays a role in hermaphrodite spermatogenesis probably by promoting the degradation of sex determination terminal factor tra-1. During mitosis, ensures the degradation of DNA licensing factor cdt-1 and the disassembly of the DNA replication CMG helicase complex by promoting the dissociation from chromatin of several of its components including cdc-45 and sld-5. The sequence is that of UBX domain-containing protein 3 from Caenorhabditis elegans.